Reading from the N-terminus, the 105-residue chain is Large ribosomal subunit protein eL42z/eL42y (105 aa).

Residues 28–57 (YKKGKDSLAAQGKRRYDRKQSGYGGQTKPV) are disordered.

It belongs to the eukaryotic ribosomal protein eL42 family.

This chain is Large ribosomal subunit protein eL42z/eL42y (RPL36AA), found in Arabidopsis thaliana (Mouse-ear cress).